Reading from the N-terminus, the 269-residue chain is Hemin import ATP-binding protein HmuV (269 aa).

An ABC transporter domain is found at 5-242 (LDAEAASFAI…SLIRRVFDIA (238 aa)). ATP is bound at residue 37–44 (GPNGAGKS).

It belongs to the ABC transporter superfamily. Heme (hemin) importer (TC 3.A.1.14.5) family. In terms of assembly, the complex is composed of two ATP-binding proteins (HmuV), two transmembrane proteins (HmuU) and a solute-binding protein (HmuT).

It is found in the cell inner membrane. In terms of biological role, part of the ABC transporter complex HmuTUV involved in hemin import. Responsible for energy coupling to the transport system. This is Hemin import ATP-binding protein HmuV from Rhodopseudomonas palustris (strain BisB18).